The sequence spans 345 residues: S-adenosylmethionine:tRNA ribosyltransferase-isomerase (345 aa).

It belongs to the QueA family. In terms of assembly, monomer.

The protein resides in the cytoplasm. The catalysed reaction is 7-aminomethyl-7-carbaguanosine(34) in tRNA + S-adenosyl-L-methionine = epoxyqueuosine(34) in tRNA + adenine + L-methionine + 2 H(+). Its pathway is tRNA modification; tRNA-queuosine biosynthesis. Functionally, transfers and isomerizes the ribose moiety from AdoMet to the 7-aminomethyl group of 7-deazaguanine (preQ1-tRNA) to give epoxyqueuosine (oQ-tRNA). In Alkalilimnicola ehrlichii (strain ATCC BAA-1101 / DSM 17681 / MLHE-1), this protein is S-adenosylmethionine:tRNA ribosyltransferase-isomerase.